The sequence spans 265 residues: 5'-nucleotidase SurE (265 aa).

Residues aspartate 9, aspartate 10, serine 40, and asparagine 96 each contribute to the a divalent metal cation site.

This sequence belongs to the SurE nucleotidase family. It depends on a divalent metal cation as a cofactor.

The protein localises to the cytoplasm. The catalysed reaction is a ribonucleoside 5'-phosphate + H2O = a ribonucleoside + phosphate. Nucleotidase that shows phosphatase activity on nucleoside 5'-monophosphates. The sequence is that of 5'-nucleotidase SurE from Methanothrix thermoacetophila (strain DSM 6194 / JCM 14653 / NBRC 101360 / PT) (Methanosaeta thermophila).